We begin with the raw amino-acid sequence, 257 residues long: UPF0246 protein Shewmr4_2963 (257 aa).

It belongs to the UPF0246 family.

This Shewanella sp. (strain MR-4) protein is UPF0246 protein Shewmr4_2963.